The following is a 227-amino-acid chain: Octanoyltransferase (227 aa).

The 176-residue stretch at 43 to 218 (ADSQDELWIV…TFTKTLGYQE (176 aa)) folds into the BPL/LPL catalytic domain. Residues 82-89 (RGGQVTYH), 149-151 (SLG), and 162-164 (GLA) each bind substrate. The active-site Acyl-thioester intermediate is the Cys-180.

It belongs to the LipB family.

It localises to the cytoplasm. It carries out the reaction octanoyl-[ACP] + L-lysyl-[protein] = N(6)-octanoyl-L-lysyl-[protein] + holo-[ACP] + H(+). It functions in the pathway protein modification; protein lipoylation via endogenous pathway; protein N(6)-(lipoyl)lysine from octanoyl-[acyl-carrier-protein]: step 1/2. Catalyzes the transfer of endogenously produced octanoic acid from octanoyl-acyl-carrier-protein onto the lipoyl domains of lipoate-dependent enzymes. Lipoyl-ACP can also act as a substrate although octanoyl-ACP is likely to be the physiological substrate. The sequence is that of Octanoyltransferase from Shewanella denitrificans (strain OS217 / ATCC BAA-1090 / DSM 15013).